A 446-amino-acid chain; its full sequence is Exodeoxyribonuclease 7 large subunit (446 aa).

This sequence belongs to the XseA family. Heterooligomer composed of large and small subunits.

The protein resides in the cytoplasm. The enzyme catalyses Exonucleolytic cleavage in either 5'- to 3'- or 3'- to 5'-direction to yield nucleoside 5'-phosphates.. Its function is as follows. Bidirectionally degrades single-stranded DNA into large acid-insoluble oligonucleotides, which are then degraded further into small acid-soluble oligonucleotides. The polypeptide is Exodeoxyribonuclease 7 large subunit (Streptococcus pyogenes serotype M3 (strain ATCC BAA-595 / MGAS315)).